The following is a 203-amino-acid chain: Ras-like protein 1 (203 aa).

Residue 17–24 (GGGGVGKS) coordinates GTP. The Effector region signature appears at 39–47 (YDPTIEDSY). Residues 64-68 (DTAGQ) and 123-126 (NKCD) each bind GTP. At Cys200 the chain carries Cysteine methyl ester. A lipid anchor (S-farnesyl cysteine) is attached at Cys200. A propeptide spans 201 to 203 (ILM) (removed in mature form).

The protein belongs to the small GTPase superfamily. Ras family.

The protein resides in the cell membrane. It catalyses the reaction GTP + H2O = GDP + phosphate + H(+). With respect to regulation, alternates between an inactive form bound to GDP and an active form bound to GTP. Activated by a guanine nucleotide-exchange factor (GEF) and inactivated by a GTPase-activating protein (GAP). This is Ras-like protein 1 (RAS1) from Mucor circinelloides f. lusitanicus (Mucor racemosus var. lusitanicus).